The following is a 312-amino-acid chain: Phosphatidate cytidylyltransferase (312 aa).

Residues 1-31 (MASTDPGTGTPLDESVPGIKRAMRQSTKNTP) are disordered. 8 consecutive transmembrane segments (helical) span residues 37 to 57 (LPAA…TLVF), 58 to 78 (APRI…HEVV), 85 to 105 (GYVI…WLTW), 110 to 130 (VGAL…RLVM), 157 to 177 (ATVF…LLVY), 186 to 206 (FCLM…GVLF), 223 to 243 (GFAG…TFLA), and 247 to 267 (PWVG…GDLV).

The protein belongs to the CDS family.

The protein localises to the cell membrane. The catalysed reaction is a 1,2-diacyl-sn-glycero-3-phosphate + CTP + H(+) = a CDP-1,2-diacyl-sn-glycerol + diphosphate. It functions in the pathway phospholipid metabolism; CDP-diacylglycerol biosynthesis; CDP-diacylglycerol from sn-glycerol 3-phosphate: step 3/3. This Mycobacterium leprae (strain TN) protein is Phosphatidate cytidylyltransferase (cdsA).